A 134-amino-acid chain; its full sequence is Protein OPG030 (134 aa).

The BACK domain maps to 88-133 (YKENGLRNSFLRQYINNNIEEIRNTDQFLKFDVDSVCDILNNDETI).

This sequence belongs to the orthopoxvirus OPG030 family.

The polypeptide is Protein OPG030 (OPG30) (Variola virus (isolate Human/India/Ind3/1967) (VARV)).